Here is a 231-residue protein sequence, read N- to C-terminus: Probable transglycosylase SceD (231 aa).

A signal peptide spans 1-27; sequence MKKTLLASSLAVGLGIVAGNAGHEAQA. Residues 92 to 153 form a disordered region; that stretch reads MSAQAPATNN…ESKASEGSSV (62 aa). The span at 96–116 shows a compositional bias: polar residues; the sequence is APATNNVAPSADQSNQVQSQE. Residues 119–137 are compositionally biased toward low complexity; sequence APQNAQTQQPQASTSNNSQ. Positions 138-153 are enriched in polar residues; sequence VTATPTESKASEGSSV.

This sequence belongs to the transglycosylase family. SceD subfamily.

The protein localises to the secreted. Is able to cleave peptidoglycan and affects clumping and separation of bacterial cells. The protein is Probable transglycosylase SceD (sceD) of Staphylococcus aureus (strain MRSA252).